Consider the following 855-residue polypeptide: Pre-mRNA-splicing factor SYF1 (855 aa).

HAT repeat units follow at residues 15–47, 48–80, 90–122, 124–158, 160–192, 198–230, 235–268, 270–305, and 369–407; these read LVFEEEDLPYEEEIMRNQFSVKCWLRYIEFKQG, APKPRLNQLYERALKLLPCSYKLWYRYLKARRA, PAYEDVNNCHERAFVFMHKMPRLWLDYCQFLMD, GRVTHTRRTFDRALRALPITQHSRIWPLYLRFLRS, PLPETAVRGYRRFLKLSPESAEEYIEYLKSSDR, QRLATVVNDERFVSKAGKSNYQLWHELCDLISQ, VQSLNVDAIIRGGLTRFTDQLGKLWCSLADYYIR, GHFEKARDVYEEAIRTVMTVRDFTQVFDSYAQFEES, and GRPREIINTYTEAVQTVDPFKATGKPHTLWVAFAKFYED. An N6-acetyllysine modification is found at K420. HAT repeat units lie at residues 498-530, 532-566, 571-605, 643-677, and 679-713; these read GTFQSTKAVYDRILDLRIATPQIVINYAMFLEE, KYFEESFKAYERGISLFKWPNVSDIWSTYLTKFIS, RKLERARDLFEQALDGCPPKYAKTLYLLYAQLEEE, YGVTHTRGIYQKAIEVLSDEHAREMCLRFADMECK, and GEIDRARAIYSFCSQICDPRTTGAFWQTWKDFEVR. Positions 808 to 855 are disordered; the sequence is AELAQQANPEEIQLGEDEDEDEMDLEPNEVRLEQQSVPAAVFGSLKED. Residues 820–834 show a composition bias toward acidic residues; the sequence is QLGEDEDEDEMDLEP. Position 851 is a phosphoserine (S851).

It belongs to the crooked-neck family. As to quaternary structure, associates with RNA polymerase II, the TCR-specific proteins CKN1/CSA and ERCC6/CSB, and XPA. Identified in the spliceosome C complex. Component of the XAB2 complex, a multimeric protein complex composed of XAB2, PRPF19, AQR, ZNF830, ISY1, and PPIE. Identified in a pentameric intron-binding (IB) complex composed of AQR, XAB2, ISY1, ZNF830 and PPIE that is incorporated into the spliceosome as a preassembled complex. The IB complex does not contain PRPF19.

It is found in the nucleus. Functionally, involved in pre-mRNA splicing as component of the spliceosome. Involved in transcription-coupled repair (TCR), transcription and pre-mRNA splicing. The sequence is that of Pre-mRNA-splicing factor SYF1 (Xab2) from Rattus norvegicus (Rat).